A 354-amino-acid polypeptide reads, in one-letter code: Neutral protease 2 homolog SNOG_02177 (354 aa).

Positions 1-19 (MKFQILSVAALASLASAVS) are cleaved as a signal peptide. The propeptide occupies 20–182 (DALDKRDSPL…WIDLAKRTIV (163 aa)). Cystine bridges form between Cys186–Cys257 and Cys264–Cys282. An N-linked (GlcNAc...) asparagine glycan is attached at Asn214. His306 lines the Zn(2+) pocket. Residue Glu307 is part of the active site. His310 serves as a coordination point for Zn(2+).

Belongs to the peptidase M35 family. Zn(2+) serves as cofactor.

The protein localises to the secreted. The catalysed reaction is Preferential cleavage of bonds with hydrophobic residues in P1'. Also 3-Asn-|-Gln-4 and 8-Gly-|-Ser-9 bonds in insulin B chain.. Functionally, secreted metalloproteinase that allows assimilation of proteinaceous substrates. Shows high activities on basic nuclear substrates such as histone and protamine. The protein is Neutral protease 2 homolog SNOG_02177 of Phaeosphaeria nodorum (strain SN15 / ATCC MYA-4574 / FGSC 10173) (Glume blotch fungus).